The primary structure comprises 211 residues: Nucleoside triphosphate pyrophosphatase (211 aa).

Catalysis depends on D75, which acts as the Proton acceptor.

This sequence belongs to the Maf family. It depends on a divalent metal cation as a cofactor.

The protein resides in the cytoplasm. It catalyses the reaction a ribonucleoside 5'-triphosphate + H2O = a ribonucleoside 5'-phosphate + diphosphate + H(+). The catalysed reaction is a 2'-deoxyribonucleoside 5'-triphosphate + H2O = a 2'-deoxyribonucleoside 5'-phosphate + diphosphate + H(+). In terms of biological role, nucleoside triphosphate pyrophosphatase. May have a dual role in cell division arrest and in preventing the incorporation of modified nucleotides into cellular nucleic acids. This chain is Nucleoside triphosphate pyrophosphatase, found in Prochlorococcus marinus (strain NATL1A).